The chain runs to 312 residues: Glyoxylate/hydroxypyruvate reductase A (312 aa).

Residue arginine 227 is part of the active site. The Proton donor role is filled by histidine 275.

It belongs to the D-isomer specific 2-hydroxyacid dehydrogenase family. GhrA subfamily.

It is found in the cytoplasm. The enzyme catalyses glycolate + NADP(+) = glyoxylate + NADPH + H(+). It catalyses the reaction (R)-glycerate + NAD(+) = 3-hydroxypyruvate + NADH + H(+). The catalysed reaction is (R)-glycerate + NADP(+) = 3-hydroxypyruvate + NADPH + H(+). Its function is as follows. Catalyzes the NADPH-dependent reduction of glyoxylate and hydroxypyruvate into glycolate and glycerate, respectively. This chain is Glyoxylate/hydroxypyruvate reductase A, found in Salmonella heidelberg (strain SL476).